A 357-amino-acid polypeptide reads, in one-letter code: Cinnamyl alcohol dehydrogenase 7 (357 aa).

Cys-46 contributes to the Zn(2+) binding site. Thr-48 is an NADP(+) binding site. The Zn(2+) site is built by His-68, Glu-69, Cys-99, Cys-102, Cys-105, Cys-113, and Cys-162. NADP(+) is bound by residues Thr-166, 187–192 (GLGGLG), 210–215 (STSERK), Thr-250, Gly-274, and 297–299 (SMV).

The protein belongs to the zinc-containing alcohol dehydrogenase family. As to quaternary structure, homodimer. Zn(2+) is required as a cofactor. As to expression, expressed in the differentiation and elongation zones of primary and lateral roots. Expressed in the hypocotyl, cotyledon and leaf veins, hydathodes and trichomes. In stems, expressed in the vascular cambium region. Expressed in the style, anthers, stamen filaments, vascular tissues of sepals and stigmatic regions in flowers, and abscission, style and stigmatic regions of siliques and seed testa.

The enzyme catalyses (E)-cinnamyl alcohol + NADP(+) = (E)-cinnamaldehyde + NADPH + H(+). Its pathway is aromatic compound metabolism; phenylpropanoid biosynthesis. In terms of biological role, involved in lignin biosynthesis. Catalyzes the final step specific for the production of lignin monomers. Catalyzes the NADPH-dependent reduction of coniferaldehyde, 5-hydroxyconiferaldehyde, sinapaldehyde, 4-coumaraldehyde and caffeyl aldehyde to their respective alcohols. The chain is Cinnamyl alcohol dehydrogenase 7 (CAD7) from Arabidopsis thaliana (Mouse-ear cress).